Here is a 200-residue protein sequence, read N- to C-terminus: MDKTQPHPLFKLATELGPLIVFFVVNAKFNLFAATGAFMVAIVAAMIASYVVTKHVPLMAIVTGIVVLVFGTLTLVLHDETFIKLKPTIIYGLFAAVLGGGLLFNRSFIAIMFDQMFNLTPAGWRILTFRWALFFAAMAVLNEIIWRTQSTDFWVGFKAFGVVPLTMIFAIAQMPLIKRYHQDPASLEASDAAEGDVSKG.

6 helical membrane-spanning segments follow: residues 7 to 27 (HPLF…VVNA), 32 to 52 (FAAT…SYVV), 56 to 76 (VPLM…LTLV), 93 to 113 (LFAA…AIMF), 126 to 146 (ILTF…EIIW), and 153 to 173 (FWVG…AIAQ).

Belongs to the YciB family.

It localises to the cell inner membrane. Plays a role in cell envelope biogenesis, maintenance of cell envelope integrity and membrane homeostasis. The sequence is that of Inner membrane-spanning protein YciB from Bradyrhizobium sp. (strain BTAi1 / ATCC BAA-1182).